Reading from the N-terminus, the 286-residue chain is uncharacterized protein (286 aa).

2 helical membrane-spanning segments follow: residues 201–221 (VIYSITGAFSFIFGLGVLCET) and 231–251 (AIILGFIILILILAIVNYLMM).

The protein localises to the cell membrane. This is an uncharacterized protein from Methanocaldococcus jannaschii (strain ATCC 43067 / DSM 2661 / JAL-1 / JCM 10045 / NBRC 100440) (Methanococcus jannaschii).